We begin with the raw amino-acid sequence, 402 residues long: Putative RNA-guided DNA endonuclease (402 aa).

D188 is an active-site residue. The tract at residues 202–239 is disordered; that stretch reads KITNPKHERRDRARLAKAQRDVSRKAKGSANRKKARRK. Residues 204–225 are compositionally biased toward basic and acidic residues; that stretch reads TNPKHERRDRARLAKAQRDVSR. Residues 226 to 239 are compositionally biased toward basic residues; it reads KAKGSANRKKARRK. E272 is an active-site residue. The Zn(2+) site is built by C325, C328, C344, and C346. D353 is an active-site residue. A disordered region spans residues 373–402; the sequence is GIRPQRESSRTGRSSVKQEPQRATAGIPRL.

It in the N-terminal section; belongs to the transposase 2 family. This sequence in the C-terminal section; belongs to the transposase 35 family.

Its function is as follows. An RNA-guided dsDNA endonuclease. When guided by an RNA derived from the right-end element of its insertion sequence element (IS), cleaves DNA downstream of the transposon-associated motif (TAM). Cleaves supercoiled and linear DNA in a staggered manner 15-21 bases from the TAM yielding 5'-overhangs. Binds reRNA, an approximately 150 nucleotide base sRNA derived from the 3' end of its own gene, the right end (RE) of the insertion sequence (IS) plus sequence downstream of the IS. The chain is Putative RNA-guided DNA endonuclease from Streptomyces pristinaespiralis.